A 584-amino-acid polypeptide reads, in one-letter code: MSNNFTKVENPVLIVEGKQADNERLKAESDYLRGTIKDDLQDRMTGGFTSDNFQLIRTHGMYQQDDRDIRAERQKQKLEPLHNVMLRARLPGGIINPTQWLAIDKFADDYTSYGSIRLTTRQTFQFHGVLKPNIKLMHQTLNSVGLDSIATAGDVNRNVLCTSNPVESALHQEAYEWATKISEHLLPKTRAYAEIWLDEEKVETTEADEIEPILGSNYLPRKFKTTVVIPPNNDIDVHANDLNFVAISEGGELIGFNVLVGGGLAMTHGDKATYPRCADDFGFIPKEHTLAIAAAVVTTQRDWGNRVNRKNAKTKYTLDRVGVDTFKAEVERRAGIKFSESRSYEFTHRGDSFGWVEGIDGKNHLTLFIENGRILDFNGANSDSKALKTGMREIAKIHKGDFRLTANQNLIVAGVSAEDKTIIEQLAREHGLINDGVSNQRKSSMACVAFPTCPLAMAEAERYLPGLVDDVEAILEKNGLKDDSIILRVTGCPNGCGRAMLAEIGLVGKGPGKYNMYLGSDLAGSRVPKLYKENVDEAGVLSEIDALSARWSAERNDGEAFGDFVIRAGIVEQVIVSFRDFHHA.

Positions 447, 453, 492, and 496 each coordinate [4Fe-4S] cluster. Position 496 (cysteine 496) interacts with siroheme.

This sequence belongs to the nitrite and sulfite reductase 4Fe-4S domain family. Alpha(8)-beta(8). The alpha component is a flavoprotein, the beta component is a hemoprotein. It depends on siroheme as a cofactor. The cofactor is [4Fe-4S] cluster.

The catalysed reaction is hydrogen sulfide + 3 NADP(+) + 3 H2O = sulfite + 3 NADPH + 4 H(+). Its pathway is sulfur metabolism; hydrogen sulfide biosynthesis; hydrogen sulfide from sulfite (NADPH route): step 1/1. Functionally, component of the sulfite reductase complex that catalyzes the 6-electron reduction of sulfite to sulfide. This is one of several activities required for the biosynthesis of L-cysteine from sulfate. The polypeptide is Sulfite reductase [NADPH] hemoprotein beta-component (Colwellia psychrerythraea (strain 34H / ATCC BAA-681) (Vibrio psychroerythus)).